Consider the following 351-residue polypeptide: UPF0764 protein C16orf89 homolog (351 aa).

The first 25 residues, M1 to Q25, serve as a signal peptide directing secretion.

This sequence belongs to the UPF0764 family. In terms of assembly, homodimer.

It localises to the secreted. This Danio rerio (Zebrafish) protein is UPF0764 protein C16orf89 homolog.